We begin with the raw amino-acid sequence, 276 residues long: Diaminopimelate epimerase (276 aa).

The substrate site is built by Asn-13, Gln-46, and Asn-66. The active-site Proton donor is Cys-75. Residues 76-77, Asn-159, Asn-192, and 210-211 each bind substrate; these read GN and ER. The active-site Proton acceptor is the Cys-219. Substrate is bound at residue 220–221; that stretch reads GT.

It belongs to the diaminopimelate epimerase family. In terms of assembly, homodimer.

It is found in the cytoplasm. It catalyses the reaction (2S,6S)-2,6-diaminopimelate = meso-2,6-diaminopimelate. It functions in the pathway amino-acid biosynthesis; L-lysine biosynthesis via DAP pathway; DL-2,6-diaminopimelate from LL-2,6-diaminopimelate: step 1/1. In terms of biological role, catalyzes the stereoinversion of LL-2,6-diaminopimelate (L,L-DAP) to meso-diaminopimelate (meso-DAP), a precursor of L-lysine and an essential component of the bacterial peptidoglycan. The protein is Diaminopimelate epimerase of Teredinibacter turnerae (strain ATCC 39867 / T7901).